We begin with the raw amino-acid sequence, 194 residues long: Peptide deformylase (194 aa).

The disordered stretch occupies residues 71–93 (DAEPEECGHDHGDGEGAHKHYPV). Positions 76–93 (ECGHDHGDGEGAHKHYPV) are enriched in basic and acidic residues. Cysteine 119 and histidine 161 together coordinate Fe cation. Glutamate 162 is a catalytic residue. Histidine 165 contacts Fe cation.

The protein belongs to the polypeptide deformylase family. Fe(2+) serves as cofactor.

It carries out the reaction N-terminal N-formyl-L-methionyl-[peptide] + H2O = N-terminal L-methionyl-[peptide] + formate. In terms of biological role, removes the formyl group from the N-terminal Met of newly synthesized proteins. Requires at least a dipeptide for an efficient rate of reaction. N-terminal L-methionine is a prerequisite for activity but the enzyme has broad specificity at other positions. The chain is Peptide deformylase from Erythrobacter litoralis (strain HTCC2594).